A 332-amino-acid polypeptide reads, in one-letter code: L-lactate dehydrogenase A-like 6A (332 aa).

Ala2 bears the N-acetylalanine mark. N6-acetyllysine; alternate is present on residues Lys5 and Lys57. An N6-succinyllysine; alternate modification is found at Lys5. 29-57 (GSVGVACAISILLKGLSDELVLVDVDEGK) contributes to the NAD(+) binding site. Residue Lys57 forms a Glycyl lysine isopeptide (Lys-Gly) (interchain with G-Cter in SUMO2); alternate linkage. Lys81 bears the N6-acetyllysine mark. NAD(+) is bound at residue Arg99. Residue Arg106 coordinates substrate. The residue at position 118 (Lys118) is an N6-acetyllysine; alternate. An N6-succinyllysine; alternate modification is found at Lys118. Asn138 is a binding site for NAD(+). Asn138 and Arg169 together coordinate substrate. Residue His193 is the Proton acceptor of the active site. At Lys232 the chain carries N6-acetyllysine. Tyr239 carries the post-translational modification Phosphotyrosine. N6-acetyllysine is present on Lys243. Thr248 lines the substrate pocket. The residue at position 309 (Thr309) is a Phosphothreonine. Position 318 is an N6-acetyllysine; alternate (Lys318). Lys318 is subject to N6-succinyllysine; alternate. Thr322 bears the Phosphothreonine mark.

The protein belongs to the LDH/MDH superfamily. LDH family. Testis-specific.

It is found in the cytoplasm. It catalyses the reaction (S)-lactate + NAD(+) = pyruvate + NADH + H(+). The protein operates within fermentation; pyruvate fermentation to lactate; (S)-lactate from pyruvate: step 1/1. Functionally, catalyzes the interconversion of L-lactate and pyruvate with nicotinamide adenine dinucleotide NAD(+) as a coenzyme. Significantly increases the transcriptional activity of JUN, when overexpressed. This is L-lactate dehydrogenase A-like 6A (LDHAL6A) from Homo sapiens (Human).